Here is a 45-residue protein sequence, read N- to C-terminus: uncharacterized protein (45 aa).

Over residues 1–26 the composition is skewed to basic and acidic residues; sequence MIMGKDRQEKKLKASGRVESDRDQSI. Residues 1 to 45 are disordered; that stretch reads MIMGKDRQEKKLKASGRVESDRDQSIHYDGATSLEQNGRFKKRKS.

This is an uncharacterized protein from Bacillus subtilis (strain 168).